The chain runs to 223 residues: Endonuclease NucS (223 aa).

This sequence belongs to the NucS endonuclease family.

The protein localises to the cytoplasm. Functionally, cleaves both 3' and 5' ssDNA extremities of branched DNA structures. In Streptomyces coelicolor (strain ATCC BAA-471 / A3(2) / M145), this protein is Endonuclease NucS.